A 340-amino-acid polypeptide reads, in one-letter code: tRNA N6-adenosine threonylcarbamoyltransferase (340 aa).

The Fe cation site is built by histidine 113 and histidine 117. Substrate-binding positions include 135-139, aspartate 169, glycine 182, aspartate 186, and asparagine 274; that span reads LVSGG. Residue aspartate 302 coordinates Fe cation.

This sequence belongs to the KAE1 / TsaD family. Fe(2+) is required as a cofactor.

It is found in the cytoplasm. It carries out the reaction L-threonylcarbamoyladenylate + adenosine(37) in tRNA = N(6)-L-threonylcarbamoyladenosine(37) in tRNA + AMP + H(+). Functionally, required for the formation of a threonylcarbamoyl group on adenosine at position 37 (t(6)A37) in tRNAs that read codons beginning with adenine. Is involved in the transfer of the threonylcarbamoyl moiety of threonylcarbamoyl-AMP (TC-AMP) to the N6 group of A37, together with TsaE and TsaB. TsaD likely plays a direct catalytic role in this reaction. The protein is tRNA N6-adenosine threonylcarbamoyltransferase of Mycolicibacterium gilvum (strain PYR-GCK) (Mycobacterium gilvum (strain PYR-GCK)).